A 249-amino-acid chain; its full sequence is 3-deoxy-manno-octulosonate cytidylyltransferase (249 aa).

The protein belongs to the KdsB family.

The protein resides in the cytoplasm. The enzyme catalyses 3-deoxy-alpha-D-manno-oct-2-ulosonate + CTP = CMP-3-deoxy-beta-D-manno-octulosonate + diphosphate. The protein operates within nucleotide-sugar biosynthesis; CMP-3-deoxy-D-manno-octulosonate biosynthesis; CMP-3-deoxy-D-manno-octulosonate from 3-deoxy-D-manno-octulosonate and CTP: step 1/1. It participates in bacterial outer membrane biogenesis; lipopolysaccharide biosynthesis. Its function is as follows. Activates KDO (a required 8-carbon sugar) for incorporation into bacterial lipopolysaccharide in Gram-negative bacteria. The chain is 3-deoxy-manno-octulosonate cytidylyltransferase from Oleidesulfovibrio alaskensis (strain ATCC BAA-1058 / DSM 17464 / G20) (Desulfovibrio alaskensis).